We begin with the raw amino-acid sequence, 295 residues long: Glutamyl-Q tRNA(Asp) synthetase (295 aa).

L-glutamate contacts are provided by residues arginine 5 to serine 9 and glutamate 41. Residues proline 8 to serine 18 carry the 'HIGH' region motif. Zn(2+) is bound by residues cysteine 97, cysteine 99, tyrosine 117, and cysteine 121. L-glutamate contacts are provided by tyrosine 178 and arginine 196. The short motif at lysine 234–glutamine 238 is the 'KMSKS' region element. Lysine 237 is a binding site for ATP.

Belongs to the class-I aminoacyl-tRNA synthetase family. GluQ subfamily. It depends on Zn(2+) as a cofactor.

In terms of biological role, catalyzes the tRNA-independent activation of glutamate in presence of ATP and the subsequent transfer of glutamate onto a tRNA(Asp). Glutamate is transferred on the 2-amino-5-(4,5-dihydroxy-2-cyclopenten-1-yl) moiety of the queuosine in the wobble position of the QUC anticodon. The polypeptide is Glutamyl-Q tRNA(Asp) synthetase (Neisseria meningitidis serogroup A / serotype 4A (strain DSM 15465 / Z2491)).